The chain runs to 386 residues: 1-deoxy-D-xylulose 5-phosphate reductoisomerase (386 aa).

Threonine 10, glycine 11, serine 12, isoleucine 13, glycine 36, asparagine 38, and asparagine 122 together coordinate NADPH. Lysine 123 is a binding site for 1-deoxy-D-xylulose 5-phosphate. Residue glutamate 124 participates in NADPH binding. Aspartate 148 is a binding site for Mn(2+). 4 residues coordinate 1-deoxy-D-xylulose 5-phosphate: serine 149, glutamate 150, serine 174, and histidine 197. Residue glutamate 150 participates in Mn(2+) binding. Residue glycine 203 participates in NADPH binding. 1-deoxy-D-xylulose 5-phosphate contacts are provided by serine 210, asparagine 215, lysine 216, and glutamate 219. Glutamate 219 is a binding site for Mn(2+).

It belongs to the DXR family. Requires Mg(2+) as cofactor. Mn(2+) serves as cofactor.

The catalysed reaction is 2-C-methyl-D-erythritol 4-phosphate + NADP(+) = 1-deoxy-D-xylulose 5-phosphate + NADPH + H(+). It participates in isoprenoid biosynthesis; isopentenyl diphosphate biosynthesis via DXP pathway; isopentenyl diphosphate from 1-deoxy-D-xylulose 5-phosphate: step 1/6. Its function is as follows. Catalyzes the NADPH-dependent rearrangement and reduction of 1-deoxy-D-xylulose-5-phosphate (DXP) to 2-C-methyl-D-erythritol 4-phosphate (MEP). The protein is 1-deoxy-D-xylulose 5-phosphate reductoisomerase of Geobacter sulfurreducens (strain ATCC 51573 / DSM 12127 / PCA).